An 884-amino-acid chain; its full sequence is Translation initiation factor IF-2 (884 aa).

Positions 93-288 are disordered; that stretch reads VNTPEAEQAK…KGKRKPSTLQ (196 aa). Over residues 99–209 the composition is skewed to basic and acidic residues; sequence EQAKAEEQAQ…KMAAENEGKW (111 aa). Over residues 216 to 229 the composition is skewed to polar residues; it reads QTESADYHVTTSQH. Basic and acidic residues predominate over residues 231–246; it reads RAAEDENDAKVEGDRR. Residues 247 to 261 show a composition bias toward basic residues; it reads SRTRGGKATKQKKGN. Residues 262–275 show a composition bias toward basic and acidic residues; the sequence is KLSESKADREEARA. Positions 383–552 constitute a tr-type G domain; it reads HRAPVVTIMG…LLQAEVLELK (170 aa). The G1 stretch occupies residues 392 to 399; that stretch reads GHVDHGKT. A GTP-binding site is contributed by 392 to 399; sequence GHVDHGKT. The interval 417–421 is G2; the sequence is GITQH. The tract at residues 438-441 is G3; the sequence is DTPG. GTP-binding positions include 438 to 442 and 492 to 495; these read DTPGH and NKID. A G4 region spans residues 492 to 495; the sequence is NKID. The tract at residues 528–530 is G5; the sequence is SAK.

The protein belongs to the TRAFAC class translation factor GTPase superfamily. Classic translation factor GTPase family. IF-2 subfamily.

The protein resides in the cytoplasm. Its function is as follows. One of the essential components for the initiation of protein synthesis. Protects formylmethionyl-tRNA from spontaneous hydrolysis and promotes its binding to the 30S ribosomal subunits. Also involved in the hydrolysis of GTP during the formation of the 70S ribosomal complex. The chain is Translation initiation factor IF-2 from Yersinia pestis bv. Antiqua (strain Antiqua).